The primary structure comprises 72 residues: Translation initiation factor IF-1 (72 aa).

Positions 1–72 (MSKEEVLEFS…TKGRITYRYK (72 aa)) constitute an S1-like domain.

Belongs to the IF-1 family. As to quaternary structure, component of the 30S ribosomal translation pre-initiation complex which assembles on the 30S ribosome in the order IF-2 and IF-3, IF-1 and N-formylmethionyl-tRNA(fMet); mRNA recruitment can occur at any time during PIC assembly.

It is found in the cytoplasm. Functionally, one of the essential components for the initiation of protein synthesis. Stabilizes the binding of IF-2 and IF-3 on the 30S subunit to which N-formylmethionyl-tRNA(fMet) subsequently binds. Helps modulate mRNA selection, yielding the 30S pre-initiation complex (PIC). Upon addition of the 50S ribosomal subunit IF-1, IF-2 and IF-3 are released leaving the mature 70S translation initiation complex. This chain is Translation initiation factor IF-1, found in Bartonella quintana (strain Toulouse) (Rochalimaea quintana).